The chain runs to 34 residues: Photosystem II reaction center protein M (34 aa).

Residues 5–25 (ILGLMAVALFILIPTSFLLIL) traverse the membrane as a helical segment.

The protein belongs to the PsbM family. In terms of assembly, PSII is composed of 1 copy each of membrane proteins PsbA, PsbB, PsbC, PsbD, PsbE, PsbF, PsbH, PsbI, PsbJ, PsbK, PsbL, PsbM, PsbT, PsbX, PsbY, PsbZ, Psb30/Ycf12, at least 3 peripheral proteins of the oxygen-evolving complex and a large number of cofactors. It forms dimeric complexes.

The protein resides in the plastid. The protein localises to the chloroplast thylakoid membrane. Its function is as follows. One of the components of the core complex of photosystem II (PSII). PSII is a light-driven water:plastoquinone oxidoreductase that uses light energy to abstract electrons from H(2)O, generating O(2) and a proton gradient subsequently used for ATP formation. It consists of a core antenna complex that captures photons, and an electron transfer chain that converts photonic excitation into a charge separation. This subunit is found at the monomer-monomer interface. The polypeptide is Photosystem II reaction center protein M (Tupiella akineta (Green alga)).